The chain runs to 275 residues: Erythroagglutinating phytohemagglutinin (275 aa).

The N-terminal stretch at 1 to 21 (MASSNLLSLALFLVLLTHANS) is a signal peptide. N-linked (GlcNAc...) (high mannose) asparagine glycosylation occurs at N33. N-linked (GlcNAc...) asparagine glycosylation is found at N81 and N101.

The protein belongs to the leguminous lectin family.

Its function is as follows. This insecticidal carbohydrate-binding lectin is toxic for the cowpea weevil. This Phaseolus vulgaris (Kidney bean) protein is Erythroagglutinating phytohemagglutinin (DLEC1).